The chain runs to 81 residues: Toxin-like peptide AaF1CA5 (81 aa).

The signal sequence occupies residues 1–22 (MMKLMLFSIIVILFSLIGSIHG). The LCN-type CS-alpha/beta domain maps to 25 to 81 (VPGNYPLDSSDDTYLCAPLGENPFCIKICRKHGVKYGLMLRLPCWCEYFGKIKNVKI). Intrachain disulfides connect C49–C68 and C53–C70.

It belongs to the long (3 C-C) scorpion toxin superfamily. As to expression, expressed by the venom gland.

The protein localises to the secreted. Its function is as follows. Probable neurotoxin that inhibits ion channels. In Androctonus australis (Sahara scorpion), this protein is Toxin-like peptide AaF1CA5.